The primary structure comprises 247 residues: Carboxy-S-adenosyl-L-methionine synthase (247 aa).

Residues Tyr40, 65 to 67 (GAS), 90 to 91 (DN), 122 to 123 (DI), Asn137, and Arg204 each bind S-adenosyl-L-methionine.

It belongs to the class I-like SAM-binding methyltransferase superfamily. Cx-SAM synthase family. As to quaternary structure, homodimer.

It catalyses the reaction prephenate + S-adenosyl-L-methionine = carboxy-S-adenosyl-L-methionine + 3-phenylpyruvate + H2O. In terms of biological role, catalyzes the conversion of S-adenosyl-L-methionine (SAM) to carboxy-S-adenosyl-L-methionine (Cx-SAM). The protein is Carboxy-S-adenosyl-L-methionine synthase of Pseudomonas entomophila (strain L48).